The sequence spans 394 residues: S-adenosylmethionine synthase 2 (394 aa).

Position 11 (Glu11) interacts with Mg(2+). Residue His17 coordinates ATP. Glu45 contacts K(+). Residues Glu58 and Gln101 each coordinate L-methionine. ATP is bound by residues 169–171, 237–240, Asp248, 254–255, Ala271, Lys275, and Lys279; these read DGK, SGRF, and RK. Asp248 lines the L-methionine pocket. Residue Lys279 coordinates L-methionine.

It belongs to the AdoMet synthase family. As to quaternary structure, homotetramer. Requires Mn(2+) as cofactor. Mg(2+) is required as a cofactor. It depends on Co(2+) as a cofactor. K(+) serves as cofactor.

Its subcellular location is the cytoplasm. It carries out the reaction L-methionine + ATP + H2O = S-adenosyl-L-methionine + phosphate + diphosphate. The protein operates within amino-acid biosynthesis; S-adenosyl-L-methionine biosynthesis; S-adenosyl-L-methionine from L-methionine: step 1/1. Catalyzes the formation of S-adenosylmethionine from methionine and ATP. The reaction comprises two steps that are both catalyzed by the same enzyme: formation of S-adenosylmethionine (AdoMet) and triphosphate, and subsequent hydrolysis of the triphosphate. This chain is S-adenosylmethionine synthase 2 (SAM2), found in Oryza sativa subsp. japonica (Rice).